A 231-amino-acid polypeptide reads, in one-letter code: MVGATVVSKWTPLCVASPPERNSASLNPHCSPARVNFRTALAAFRPQFRLFSRNSASRRRLRASSSAESGIFLPHLVASMEDVEETYIMVKPDGIQRGLVGEIISRFEKKGFKLIGLKMFQCPKELAEEHYKDLSAKSFFPNLIEYITSGPVVCMAWEGVGVVASARKLIGKTDPLQAEPGTIRGDLAVQTGRNIVHGSDSPENGKREIGLWFKEGELCKWDSALATWLRE.

The transit peptide at 1-62 directs the protein to the chloroplast; it reads MVGATVVSKW…RNSASRRRLR (62 aa). Positions 91, 139, 167, 173, 184, and 194 each coordinate ATP. Catalysis depends on H197, which acts as the Pros-phosphohistidine intermediate.

The protein belongs to the NDK family. In terms of assembly, interacts with PHYA, MPK3 and MPK6. Mg(2+) is required as a cofactor. Autophosphorylated.

The protein localises to the plastid. It localises to the chloroplast. It catalyses the reaction a 2'-deoxyribonucleoside 5'-diphosphate + ATP = a 2'-deoxyribonucleoside 5'-triphosphate + ADP. The catalysed reaction is a ribonucleoside 5'-diphosphate + ATP = a ribonucleoside 5'-triphosphate + ADP. Major role in the synthesis of nucleoside triphosphates other than ATP. The ATP gamma phosphate is transferred to the NDP beta phosphate via a ping-pong mechanism, using a phosphorylated active-site intermediate. May activate MPK3 and MPK6. May be involved in the regulation of cellular redox state and hydrogen peroxide-mediated MAP kinase signaling. The protein is Nucleoside diphosphate kinase II, chloroplastic (NDPK2) of Arabidopsis thaliana (Mouse-ear cress).